Here is a 490-residue protein sequence, read N- to C-terminus: Chromosomal replication initiator protein DnaA (490 aa).

The segment at 1–75 is domain I, interacts with DnaA modulators; that stretch reads MAVSSDAEQK…SELWKQEDAD (75 aa). The segment at 75 to 145 is domain II; the sequence is DLLKIEIVVR…SEFRHNVLGS (71 aa). Residues 146–368 are domain III, AAA+ region; sequence PLDPRYTFGS…GAFNQLLFRQ (223 aa). 4 residues coordinate ATP: Gly192, Gly194, Lys195, and Thr196. A domain IV, binds dsDNA region spans residues 369 to 490; it reads SFEPQITIDR…LLRRLINDQA (122 aa).

This sequence belongs to the DnaA family. Oligomerizes as a right-handed, spiral filament on DNA at oriC.

The protein localises to the cytoplasm. Plays an essential role in the initiation and regulation of chromosomal replication. ATP-DnaA binds to the origin of replication (oriC) to initiate formation of the DNA replication initiation complex once per cell cycle. Binds the DnaA box (a 9 base pair repeat at the origin) and separates the double-stranded (ds)DNA. Forms a right-handed helical filament on oriC DNA; dsDNA binds to the exterior of the filament while single-stranded (ss)DNA is stabiized in the filament's interior. The ATP-DnaA-oriC complex binds and stabilizes one strand of the AT-rich DNA unwinding element (DUE), permitting loading of DNA polymerase. After initiation quickly degrades to an ADP-DnaA complex that is not apt for DNA replication. Binds acidic phospholipids. In Mesorhizobium japonicum (strain LMG 29417 / CECT 9101 / MAFF 303099) (Mesorhizobium loti (strain MAFF 303099)), this protein is Chromosomal replication initiator protein DnaA.